The following is a 1675-amino-acid chain: Clathrin heavy chain 1 (1675 aa).

Residue A2 is modified to N-acetylalanine. The globular terminal domain stretch occupies residues 2 to 479 (AQILPIRFQE…VDPTLALSVY (478 aa)). 7 WD40-like repeat regions span residues 24–67 (NIGF…RPIS), 68–107 (ADSA…MTDD), 108–149 (VTFW…SSLA), 150–195 (GCQI…QPIE), 196–257 (GHAA…PEAQ), 258–301 (NDFP…ISGE), and 302–330 (TIFV…VCVE). The residue at position 67 (S67) is a Phosphoserine. T105 is modified (phosphothreonine). Y184 carries the post-translational modification Phosphotyrosine. At T394 the chain carries Phosphothreonine. Residues 449–465 (EKWLKEDKLECSEELGD) form a binding site for the uncoating ATPase, involved in lattice disassembly region. The tract at residues 480 to 523 (LRANVPNKVIQCFAETGQVQKIVLYAKKVGYTPDWIFLLRNVMR) is flexible linker. Residues 524-634 (ISPDQGQQFA…RALEHFTDLY (111 aa)) are distal segment. The interval 524–1675 (ISPDQGQQFA…QPQPGFGYSM (1152 aa)) is heavy chain arm. CHCR repeat units follow at residues 537 to 683 (VQDE…QIWV), 686 to 828 (ASKY…SEDV), 833 to 972 (ILVV…PLID), 979 to 1124 (LSET…VKEA), 1128 to 1269 (YIKA…FRLA), 1274 to 1420 (LHIV…LLLN), and 1423 to 1566 (LMVL…RECF). Y634 bears the Phosphotyrosine mark. Residues 639-1675 (AVVHTHLLNP…QPQPGFGYSM (1037 aa)) form a proximal segment region. K737 bears the N6-succinyllysine mark. K856 carries the post-translational modification N6-acetyllysine. Phosphotyrosine is present on Y899. S1167 bears the Phosphoserine mark. Y1206 bears the Phosphotyrosine mark. The segment at 1213 to 1522 (AAKLLYNNVS…YLFKGNNRWK (310 aa)) is involved in binding clathrin light chain. At S1229 the chain carries Phosphoserine. The residue at position 1441 (K1441) is an N6-acetyllysine; alternate. The residue at position 1441 (K1441) is an N6-succinyllysine; alternate. Residues Y1477 and Y1487 each carry the phosphotyrosine modification. At S1494 the chain carries Phosphoserine. An N6-acetyllysine modification is found at K1501. Residues 1550–1675 (AEELLQWFLQ…QPQPGFGYSM (126 aa)) are trimerization.

The protein belongs to the clathrin heavy chain family. Clathrin triskelions, composed of 3 heavy chains and 3 light chains, are the basic subunits of the clathrin coat. In the presence of light chains, hub assembly is influenced by both the pH and the concentration of calcium. Interacts with HIP1. Interacts with DENND1A, DENND1B and DENND1C. Interacts with OCRL. Interacts with ERBB2. Interacts with FKBP6. Interacts with CKAP5 and TACC3 forming the TACC3/ch-TOG/clathrin complex located at spindle inter-microtubules bridges; the complex implicates clathrin triskelions; TACC3 and CLTC are proposed to form a composite microtubule interaction surface. Interacts with ATG16L1 (via N-terminus). Interacts with RFTN1; the interaction occurs in response to pathogens. Interacts with USP2 isoform 2. Interacts with TMEM106B (via N-terminus). Interacts with DNAJC6; this interaction produces a local change in heavy-chain contacts, creating a detectable global distortion of the clathrin coat and leads to the recruitment of HSPA8.

It localises to the cytoplasmic vesicle membrane. The protein resides in the membrane. It is found in the coated pit. The protein localises to the melanosome. Its subcellular location is the cytoplasm. It localises to the cytoskeleton. The protein resides in the spindle. Functionally, clathrin is the major protein of the polyhedral coat of coated pits and vesicles. Two different adapter protein complexes link the clathrin lattice either to the plasma membrane or to the trans-Golgi network. Acts as a component of the TACC3/ch-TOG/clathrin complex proposed to contribute to stabilization of kinetochore fibers of the mitotic spindle by acting as inter-microtubule bridge. The TACC3/ch-TOG/clathrin complex is required for the maintenance of kinetochore fiber tension. Plays a role in early autophagosome formation. Interaction with DNAJC6 mediates the recruitment of HSPA8 to the clathrin lattice and creates local destabilization of the lattice promoting uncoating. The sequence is that of Clathrin heavy chain 1 from Rattus norvegicus (Rat).